A 106-amino-acid polypeptide reads, in one-letter code: ATP-dependent Clp protease adapter protein ClpS (106 aa).

Belongs to the ClpS family. As to quaternary structure, binds to the N-terminal domain of the chaperone ClpA.

Its function is as follows. Involved in the modulation of the specificity of the ClpAP-mediated ATP-dependent protein degradation. The sequence is that of ATP-dependent Clp protease adapter protein ClpS from Photobacterium profundum (strain SS9).